The chain runs to 489 residues: Ubiquitin carboxyl-terminal hydrolase 14 (489 aa).

The USP domain occupies 102-458 (CGLANLGNTC…SAYVLLYEAR (357 aa)). Cys-111 (nucleophile) is an active-site residue. The active-site Proton acceptor is His-409. Positions 467–489 (PPAPVPTEVAADTAEPMEVSEKQ) are disordered.

Belongs to the peptidase C19 family. USP14/UBP6 subfamily.

It carries out the reaction Thiol-dependent hydrolysis of ester, thioester, amide, peptide and isopeptide bonds formed by the C-terminal Gly of ubiquitin (a 76-residue protein attached to proteins as an intracellular targeting signal).. Its function is as follows. Proteasome-associated deubiquitinase which releases ubiquitin from the proteasome targeted ubiquitinated proteins. Ensures the regeneration of ubiquitin at the proteasome. The chain is Ubiquitin carboxyl-terminal hydrolase 14 (usp-14) from Caenorhabditis elegans.